Reading from the N-terminus, the 261-residue chain is (S)-ureidoglycine aminohydrolase (261 aa).

The 47-residue stretch at 184–230 (LSFAPGASHGYIETHVQEHGAYILSGQGVYNLDNNWIPVKKGDYIFM) folds into the Cupin type-2 domain. Glutamate 196, histidine 198, histidine 202, and glutamine 236 together coordinate Mn(2+). Residue glutamate 196 participates in substrate binding. Substrate contacts are provided by glutamine 236, tyrosine 249, and lysine 253.

It belongs to the UGHY family. Monomer. Mn(2+) serves as cofactor.

The protein resides in the cytoplasm. It carries out the reaction (S)-2-ureidoglycine + H2O = (S)-ureidoglycolate + NH4(+). In terms of biological role, involved in the anaerobic nitrogen utilization via the assimilation of allantoin. Catalyzes the second stereospecific hydrolysis reaction (deamination) of the allantoin degradation pathway, producing S-ureidoglycolate and ammonia from S-ureidoglycine. The polypeptide is (S)-ureidoglycine aminohydrolase (allE) (Escherichia coli (strain K12)).